A 406-amino-acid polypeptide reads, in one-letter code: L-cysteine:1D-myo-inositol 2-amino-2-deoxy-alpha-D-glucopyranoside ligase (406 aa).

Zn(2+) is bound at residue C45. Residues 45-48, T60, and 83-85 contribute to the L-cysteinyl-5'-AMP site; these read CGIT and NIT. A 'HIGH' region motif is present at residues 47–57; it reads ITPYDATHMGH. Positions 185-190 match the 'ERGGDP' region motif; the sequence is ERGGDP. W225 is an L-cysteinyl-5'-AMP binding site. C229 lines the Zn(2+) pocket. Residue 247–249 coordinates L-cysteinyl-5'-AMP; it reads GSD. H254 contributes to the Zn(2+) binding site. V281 serves as a coordination point for L-cysteinyl-5'-AMP. The 'KMSKS' region signature appears at 287-291; the sequence is KMSKS.

It belongs to the class-I aminoacyl-tRNA synthetase family. MshC subfamily. Monomer. Zn(2+) serves as cofactor.

The enzyme catalyses 1D-myo-inositol 2-amino-2-deoxy-alpha-D-glucopyranoside + L-cysteine + ATP = 1D-myo-inositol 2-(L-cysteinylamino)-2-deoxy-alpha-D-glucopyranoside + AMP + diphosphate + H(+). Functionally, catalyzes the ATP-dependent condensation of GlcN-Ins and L-cysteine to form L-Cys-GlcN-Ins. The chain is L-cysteine:1D-myo-inositol 2-amino-2-deoxy-alpha-D-glucopyranoside ligase from Kribbella flavida (strain DSM 17836 / JCM 10339 / NBRC 14399).